The sequence spans 379 residues: Cobalt-precorrin-5B C(1)-methyltransferase (379 aa).

This sequence belongs to the CbiD family.

It catalyses the reaction Co-precorrin-5B + S-adenosyl-L-methionine = Co-precorrin-6A + S-adenosyl-L-homocysteine. Its pathway is cofactor biosynthesis; adenosylcobalamin biosynthesis; cob(II)yrinate a,c-diamide from sirohydrochlorin (anaerobic route): step 6/10. In terms of biological role, catalyzes the methylation of C-1 in cobalt-precorrin-5B to form cobalt-precorrin-6A. The protein is Cobalt-precorrin-5B C(1)-methyltransferase of Salmonella typhi.